Consider the following 353-residue polypeptide: Phospho-N-acetylmuramoyl-pentapeptide-transferase (353 aa).

Transmembrane regions (helical) follow at residues 22–42, 65–85, 88–108, 129–149, 161–181, 192–212, 228–248, 256–276, 281–301, and 330–350; these read FAFF…ITWA, TPTM…LFCI, DNIF…IGLI, LLAQ…SSEL, PLFD…ISSS, GLAT…LYLS, GLGE…GFLW, VFMG…LAII, ILLL…ILQV, and KIIV…LASI.

It belongs to the glycosyltransferase 4 family. MraY subfamily. Requires Mg(2+) as cofactor.

The protein resides in the cell inner membrane. It catalyses the reaction UDP-N-acetyl-alpha-D-muramoyl-L-alanyl-gamma-D-glutamyl-meso-2,6-diaminopimeloyl-D-alanyl-D-alanine + di-trans,octa-cis-undecaprenyl phosphate = di-trans,octa-cis-undecaprenyl diphospho-N-acetyl-alpha-D-muramoyl-L-alanyl-D-glutamyl-meso-2,6-diaminopimeloyl-D-alanyl-D-alanine + UMP. It functions in the pathway cell wall biogenesis; peptidoglycan biosynthesis. In terms of biological role, catalyzes the initial step of the lipid cycle reactions in the biosynthesis of the cell wall peptidoglycan: transfers peptidoglycan precursor phospho-MurNAc-pentapeptide from UDP-MurNAc-pentapeptide onto the lipid carrier undecaprenyl phosphate, yielding undecaprenyl-pyrophosphoryl-MurNAc-pentapeptide, known as lipid I. The protein is Phospho-N-acetylmuramoyl-pentapeptide-transferase of Campylobacter jejuni (strain RM1221).